Consider the following 275-residue polypeptide: S-formylglutathione hydrolase (275 aa).

Catalysis depends on charge relay system residues S145, D221, and H254.

It belongs to the esterase D family.

The catalysed reaction is S-formylglutathione + H2O = formate + glutathione + H(+). Functionally, serine hydrolase involved in the detoxification of formaldehyde. Hydrolyzes S-formylglutathione to glutathione and formate. This is S-formylglutathione hydrolase from Haemophilus influenzae (strain ATCC 51907 / DSM 11121 / KW20 / Rd).